Reading from the N-terminus, the 456-residue chain is MTTSHQPQDRYKAVWLIFFMLGLGTLLPWNFFMTATQYFTNRLDMSQNVSLVTAELSKDAQASAAPAAPLPERNSLSAIFNNVMTLCAMLPLLLFTYLNSFLHQRIPQSVRILGSLVAILLVFLITAILVKVQLDALPFFVITMIKIVLINSFGAILQGSLFGLAGLLPASYTAPIMSGQGLAGFFASVAMICAIASGSELSESAFGYFITACAVIILTIICYLGLPRLEFYRYYQQLKLEGPGEQETKLDLISKGEEPRAGKEESGVSVSNSQPTNESHSIKAILKNISVLAFSVCFIFTITIGMFPAVTVEVKSSIAGSSTWERYFIPVSCFLTFNIFDWLGRSLTAVFMWPGKDSRWLPSLVLARLVFVPLLLLCNIKPRRYLTVVFEHDAWFIFFMAAFAFSNGYLASLCMCFGPKKVKPAEAETAGAIMAFFLCLGLALGAVFSFLFRAIV.

The Cytoplasmic segment spans residues 2 to 12 (TTSHQPQDRYK). Residues 13-29 (AVWLIFFMLGLGTLLPW) form a helical membrane-spanning segment. Topologically, residues 30–82 (NFFMTATQYFTNRLDMSQNVSLVTAELSKDAQASAAPAAPLPERNSLSAIFNN) are extracellular. An N-linked (GlcNAc...) asparagine glycan is attached at asparagine 48. The chain crosses the membrane as a helical span at residues 83 to 107 (VMTLCAMLPLLLFTYLNSFLHQRIP). Residues 108–111 (QSVR) lie on the Cytoplasmic side of the membrane. The helical transmembrane segment at 112–130 (ILGSLVAILLVFLITAILV) threads the bilayer. At 131 to 138 (KVQLDALP) the chain is on the extracellular side. Residues 139-157 (FFVITMIKIVLINSFGAIL) form a helical membrane-spanning segment. Residues 158 to 174 (QGSLFGLAGLLPASYTA) are Cytoplasmic-facing. Residues 175 to 199 (PIMSGQGLAGFFASVAMICAIASGS) traverse the membrane as a helical segment. Topologically, residues 200–206 (ELSESAF) are extracellular. Residues 207 to 227 (GYFITACAVIILTIICYLGLP) traverse the membrane as a helical segment. Over 228–291 (RLEFYRYYQQ…IKAILKNISV (64 aa)) the chain is Cytoplasmic. A phosphoserine mark is found at serine 254, serine 269, and serine 273. Over residues 254 to 266 (SKGEEPRAGKEES) the composition is skewed to basic and acidic residues. Residues 254-276 (SKGEEPRAGKEESGVSVSNSQPT) are disordered. The helical transmembrane segment at 292–311 (LAFSVCFIFTITIGMFPAVT) threads the bilayer. Residues 312 to 323 (VEVKSSIAGSST) are Extracellular-facing. Residues 324 to 342 (WERYFIPVSCFLTFNIFDW) traverse the membrane as a helical segment. The Cytoplasmic segment spans residues 343-359 (LGRSLTAVFMWPGKDSR). Residues 360 to 378 (WLPSLVLARLVFVPLLLLC) traverse the membrane as a helical segment. Over 379 to 393 (NIKPRRYLTVVFEHD) the chain is Extracellular. Residues 394-413 (AWFIFFMAAFAFSNGYLASL) form a helical membrane-spanning segment. Residues 414–431 (CMCFGPKKVKPAEAETAG) lie on the Cytoplasmic side of the membrane. A helical membrane pass occupies residues 432–452 (AIMAFFLCLGLALGAVFSFLF). Residues 453-456 (RAIV) are Extracellular-facing.

This sequence belongs to the SLC29A/ENT transporter (TC 2.A.57) family. In terms of assembly, identified in a complex with STOM. Glycosylated. Expressed in testis at the blood-testis barrier (at protein level). Detected in erythrocytes (at protein level). Expressed at relatively high levels in cerebral cortex, particularly the frontal and parietal lobes, and the thalamus and basal ganglia (at protein level). In the midbrain expressed at moderate levels, whereas in the other areas of the brainstem, namely medulla and pons, cerebellum and the hippocampus expressed at lower amounts when compared to the other brain regions (at protein level). Expressed in Langerhans cells and lymphocytes in the pancreas (at protein level). Expressed in kidney, in polarized renal epithelial cells. Expressed in adipose tissues. Expressed in placenta. Expressed in small intestine.

It localises to the basolateral cell membrane. The protein localises to the apical cell membrane. It is found in the cell membrane. It carries out the reaction adenosine(in) = adenosine(out). The catalysed reaction is guanosine(in) = guanosine(out). It catalyses the reaction inosine(in) = inosine(out). The enzyme catalyses uridine(out) = uridine(in). It carries out the reaction thymidine(in) = thymidine(out). The catalysed reaction is cytidine(in) = cytidine(out). It catalyses the reaction adenine(out) = adenine(in). The enzyme catalyses guanine(out) = guanine(in). It carries out the reaction thymine(out) = thymine(in). The catalysed reaction is uracil(in) = uracil(out). It catalyses the reaction hypoxanthine(out) = hypoxanthine(in). With respect to regulation, transporter activity is sensitive to low concentrations of the inhibitor nitrobenzylmercaptopurine riboside (NBMPR). Inhibited by dilazep. Inhibited by dipyridamole. Inhibited by hypoxanthine. Inhibited by azidothymidine (AZT). Inhibited by dideoxycytidine (ddC). Inhibited by dideoxyinosine (ddI). Inhibited by draflazine. Inhibited by soluflazine. Inhibited by cladribine. Inhibited by capecitabine. Inhibited by clofarabine. Inhibited by ribavirin. Modestly inhibited by acyclovir. Modestly inhibited by 5-fluorouracil. Functionally, uniporter involved in the facilitative transport of nucleosides and nucleobases, and contributes to maintaining their cellular homeostasis. Functions as a Na(+)-independent transporter. Involved in the transport of nucleosides such as adenosine, guanosine, inosine, uridine, thymidine and cytidine. Also transports purine nucleobases (hypoxanthine, adenine, guanine) and pyrimidine nucleobases (thymine, uracil). Mediates basolateral nucleoside uptake into Sertoli cells, thereby regulating the transport of nucleosides in testis across the blood-testis barrier. Regulates inosine levels in brown adipocytes tissues (BAT) and extracellular inosine levels, which controls BAT-dependent energy expenditure. This Homo sapiens (Human) protein is Equilibrative nucleoside transporter 1.